The chain runs to 142 residues: Prefoldin subunit alpha 2 (142 aa).

Belongs to the prefoldin subunit alpha family. In terms of assembly, heterohexamer of two alpha and four beta subunits.

Its subcellular location is the cytoplasm. Its function is as follows. Molecular chaperone capable of stabilizing a range of proteins. Seems to fulfill an ATP-independent, HSP70-like function in archaeal de novo protein folding. This chain is Prefoldin subunit alpha 2, found in Thermococcus kodakarensis (strain ATCC BAA-918 / JCM 12380 / KOD1) (Pyrococcus kodakaraensis (strain KOD1)).